We begin with the raw amino-acid sequence, 306 residues long: ATP synthase F(1) complex subunit gamma, mitochondrial (306 aa).

Residues 1–17 (MNSASKLFVVLASPANQ) constitute a mitochondrion transit peptide.

Belongs to the ATPase gamma chain family. As to quaternary structure, component of the ATP synthase complex composed at least of ATP5F1A/subunit alpha, ATP5F1B/subunit beta, ATP5MC1/subunit c (homooctomer), MT-ATP6/subunit a, MT-ATP8/subunit 8, ATP5ME/subunit e, ATP5MF/subunit f, ATP5MG/subunit g, ATP5MK/subunit k, ATP5MJ/subunit j, ATP5F1C/subunit gamma, ATP5F1D/subunit delta, ATP5F1E/subunit epsilon, ATP5PF/subunit F6, ATP5PB/subunit b, ATP5PD/subunit d, ATP5PO/subunit OSCP. ATP synthase complex consists of a soluble F(1) head domain (subunits alpha(3) and beta(3)) - the catalytic core - and a membrane F(0) domain - the membrane proton channel (subunits c, a, 8, e, f, g, k and j). These two domains are linked by a central stalk (subunits gamma, delta, and epsilon) rotating inside the F1 region and a stationary peripheral stalk (subunits F6, b, d, and OSCP).

Its subcellular location is the mitochondrion inner membrane. In terms of biological role, subunit gamma, of the mitochondrial membrane ATP synthase complex (F(1)F(0) ATP synthase or Complex V) that produces ATP from ADP in the presence of a proton gradient across the membrane which is generated by electron transport complexes of the respiratory chain. ATP synthase complex consist of a soluble F(1) head domain - the catalytic core - and a membrane F(1) domain - the membrane proton channel. These two domains are linked by a central stalk rotating inside the F(1) region and a stationary peripheral stalk. During catalysis, ATP synthesis in the catalytic domain of F(1) is coupled via a rotary mechanism of the central stalk subunits to proton translocation. In vivo, can only synthesize ATP although its ATP hydrolase activity can be activated artificially in vitro. With the central stalk subunit delta, is essential for the biogenesis of F(1) catalytic part of the ATP synthase complex namely in the formation of F1 assembly intermediate. This chain is ATP synthase F(1) complex subunit gamma, mitochondrial, found in Dictyostelium discoideum (Social amoeba).